A 325-amino-acid polypeptide reads, in one-letter code: MSLELPVFDISKPLSESSLTSLQDACKEWGFFYVTNHGVSRDMYKKLRRFSTGVFELEDEEKMKMGASNYTPRFIASPFFESLRVSGPDFYASAKSSVDAFSDQATDEEFSGLMKEYGEKMTKLCEKIMKAILSSFGDDLHHKYYESEFGNCHGYFRINNYTIPSDQEDDHHNGDEQDLIEGLGMHTDMSCITIVDQDDIGGLQVRTRDGIGLMDINPKDEALVVNVGDLLHAWTNGRLRSSQHRVILKRRGFVGNRFSLAFFWCFDDGKVVFAPDEVVGGCEGMRVFRSFKCGDYLRFRESNEKGKFEKVGDTVEDFARIEDRR.

The Fe2OG dioxygenase domain maps to 152–266 (CHGYFRINNY…RFSLAFFWCF (115 aa)). Fe cation-binding residues include histidine 186, aspartate 188, and histidine 244. 2-oxoglutarate is bound at residue arginine 257.

It belongs to the iron/ascorbate-dependent oxidoreductase family. GA20OX subfamily. The cofactor is Fe(2+). Highly expressed in elongation zone of lateral roots.

Negative regulator of root hair growth. This is Gibberellin 20-oxidase-like protein from Arabidopsis thaliana (Mouse-ear cress).